We begin with the raw amino-acid sequence, 92 residues long: MEITDVRVRKLNEEGKMKAVVSVTFDNEFVVHDIKVIEGQNGLFIAMPSRKTPEGEFKDIAHPINSDTRNRLQSAILKEYEKAKEQEAAHKE.

Belongs to the SpoVG family.

Could be involved in septation. The protein is Putative septation protein SpoVG of Thermoanaerobacter pseudethanolicus (strain ATCC 33223 / 39E) (Clostridium thermohydrosulfuricum).